Reading from the N-terminus, the 1020-residue chain is Protein CLASP-2 (1020 aa).

Residues 259-271 (ASDAASSSTSINS) are compositionally biased toward low complexity. Disordered stretches follow at residues 259 to 280 (ASDA…PFRS), 329 to 387 (PMTT…RPSA), and 419 to 461 (LQKA…ALDT). Residues 329–343 (PMTTRTLSKIDTSPG) show a composition bias toward polar residues. The span at 372 to 381 (SQPGSRNGSP) shows a compositional bias: low complexity. Residues 450–460 (QKATPQKSALD) are compositionally biased toward polar residues. An HEAT repeat occupies 954–992 (LAPCVIKSYDSPSSAVRKTAVYCLVAMVNKLGMKTMEPH).

This sequence belongs to the CLASP family. In terms of assembly, interacts with hcp-1 and hcp-2.

Its subcellular location is the cytoplasm. The protein resides in the cytoskeleton. It localises to the microtubule organizing center. The protein localises to the centrosome. It is found in the chromosome. Its subcellular location is the centromere. The protein resides in the kinetochore. It localises to the spindle. Functionally, probable microtubule plus-end tracking protein that promotes the stabilization of dynamic microtubules. Required for the formation of mitotic and meiotic spindles. Specifically promotes the polymerization of kinetochore-bound microtubules. Also required for cytoplasmic streaming. Essential for embryonic development. The sequence is that of Protein CLASP-2 (cls-2) from Caenorhabditis elegans.